The primary structure comprises 242 residues: U1 small nuclear ribonucleoprotein C (242 aa).

Residues 3 to 35 (YLGDYCDVYLTHDSMSVRKAHNSGRNHLRNVVE) form a Matrin-type; degenerate zinc finger. Residues 60–242 (GQASSNPMLQ…SSPGPSQEGK (183 aa)) form a disordered region. Composition is skewed to pro residues over residues 90-107 (MLPP…PGAP), 136-149 (PPMP…PLPN), 156-183 (PFPP…PPIP), and 201-213 (PVPP…PGAP). Over residues 231–242 (PASSPGPSQEGK) the composition is skewed to polar residues.

This sequence belongs to the U1 small nuclear ribonucleoprotein C family. In terms of assembly, U1 snRNP is composed of the 7 core Sm proteins B/B', D1, D2, D3, E, F and G that assemble in a heptameric protein ring on the Sm site of the small nuclear RNA to form the core snRNP, and at least 3 U1 snRNP-specific proteins U1-70K, U1-A and U1-C. U1-C interacts with U1 snRNA and the 5' splice-site region of the pre-mRNA.

The protein resides in the nucleus. Functionally, component of the spliceosomal U1 snRNP, which is essential for recognition of the pre-mRNA 5' splice-site and the subsequent assembly of the spliceosome. U1-C is directly involved in initial 5' splice-site recognition for both constitutive and regulated alternative splicing. The interaction with the 5' splice-site seems to precede base-pairing between the pre-mRNA and the U1 snRNA. Stimulates commitment or early (E) complex formation by stabilizing the base pairing of the 5' end of the U1 snRNA and the 5' splice-site region. This Ajellomyces capsulatus (strain G186AR / H82 / ATCC MYA-2454 / RMSCC 2432) (Darling's disease fungus) protein is U1 small nuclear ribonucleoprotein C.